Consider the following 164-residue polypeptide: Thiol peroxidase (164 aa).

The Thioredoxin domain maps to 18-163; the sequence is VSEGQHAPDF…FDAALEAYRN (146 aa). Cysteine 60 acts as the Cysteine sulfenic acid (-SOH) intermediate in catalysis. An intrachain disulfide couples cysteine 60 to cysteine 93.

This sequence belongs to the peroxiredoxin family. Tpx subfamily. In terms of assembly, homodimer.

The catalysed reaction is a hydroperoxide + [thioredoxin]-dithiol = an alcohol + [thioredoxin]-disulfide + H2O. Functionally, thiol-specific peroxidase that catalyzes the reduction of hydrogen peroxide and organic hydroperoxides to water and alcohols, respectively. Plays a role in cell protection against oxidative stress by detoxifying peroxides. The sequence is that of Thiol peroxidase from Staphylococcus haemolyticus (strain JCSC1435).